Here is a 514-residue protein sequence, read N- to C-terminus: 2,3-bisphosphoglycerate-independent phosphoglycerate mutase (514 aa).

Positions 14 and 64 each coordinate Mn(2+). The Phosphoserine intermediate role is filled by Ser-64. Substrate contacts are provided by residues His-125, 155–156, Arg-187, Arg-193, 263–266, and Lys-337; these read RD and RADR. 5 residues coordinate Mn(2+): Asp-404, His-408, Asp-445, His-446, and His-463.

This sequence belongs to the BPG-independent phosphoglycerate mutase family. As to quaternary structure, monomer. Mn(2+) serves as cofactor.

The catalysed reaction is (2R)-2-phosphoglycerate = (2R)-3-phosphoglycerate. Its pathway is carbohydrate degradation; glycolysis; pyruvate from D-glyceraldehyde 3-phosphate: step 3/5. Catalyzes the interconversion of 2-phosphoglycerate and 3-phosphoglycerate. This chain is 2,3-bisphosphoglycerate-independent phosphoglycerate mutase, found in Hahella chejuensis (strain KCTC 2396).